The chain runs to 262 residues: Ribosomal RNA small subunit methyltransferase A (262 aa).

S-adenosyl-L-methionine contacts are provided by His-16, Leu-18, Gly-43, Glu-64, Asp-89, and Asn-109.

The protein belongs to the class I-like SAM-binding methyltransferase superfamily. rRNA adenine N(6)-methyltransferase family. RsmA subfamily.

It localises to the cytoplasm. The enzyme catalyses adenosine(1518)/adenosine(1519) in 16S rRNA + 4 S-adenosyl-L-methionine = N(6)-dimethyladenosine(1518)/N(6)-dimethyladenosine(1519) in 16S rRNA + 4 S-adenosyl-L-homocysteine + 4 H(+). Specifically dimethylates two adjacent adenosines (A1518 and A1519) in the loop of a conserved hairpin near the 3'-end of 16S rRNA in the 30S particle. May play a critical role in biogenesis of 30S subunits. The protein is Ribosomal RNA small subunit methyltransferase A of Xanthomonas campestris pv. campestris (strain 8004).